We begin with the raw amino-acid sequence, 238 residues long: Ribonuclease PH (238 aa).

Residues Arg-86 and 124–126 (GTR) contribute to the phosphate site.

This sequence belongs to the RNase PH family. As to quaternary structure, homohexameric ring arranged as a trimer of dimers.

The catalysed reaction is tRNA(n+1) + phosphate = tRNA(n) + a ribonucleoside 5'-diphosphate. In terms of biological role, phosphorolytic 3'-5' exoribonuclease that plays an important role in tRNA 3'-end maturation. Removes nucleotide residues following the 3'-CCA terminus of tRNAs; can also add nucleotides to the ends of RNA molecules by using nucleoside diphosphates as substrates, but this may not be physiologically important. Probably plays a role in initiation of 16S rRNA degradation (leading to ribosome degradation) during starvation. In Rhizorhabdus wittichii (strain DSM 6014 / CCUG 31198 / JCM 15750 / NBRC 105917 / EY 4224 / RW1) (Sphingomonas wittichii), this protein is Ribonuclease PH.